A 113-amino-acid chain; its full sequence is Ferredoxin-1 (113 aa).

2 4Fe-4S ferredoxin-type domains span residues 2 to 30 (TYIV…YEGE) and 31 to 60 (NFLV…PDTE). [3Fe-4S] cluster is bound by residues cysteine 9 and cysteine 17. [4Fe-4S] cluster contacts are provided by cysteine 21, cysteine 40, cysteine 43, and cysteine 46. Position 50 (cysteine 50) interacts with [3Fe-4S] cluster.

The cofactor is [4Fe-4S] cluster. [3Fe-4S] cluster is required as a cofactor.

This chain is Ferredoxin-1 (fdxA), found in Caulobacter vibrioides (strain ATCC 19089 / CIP 103742 / CB 15) (Caulobacter crescentus).